A 167-amino-acid chain; its full sequence is Small ribosomal subunit protein uS5 (167 aa).

An S5 DRBM domain is found at 12–75; the sequence is LQEKLITVNR…EKARRNMVTI (64 aa).

This sequence belongs to the universal ribosomal protein uS5 family. As to quaternary structure, part of the 30S ribosomal subunit. Contacts proteins S4 and S8.

With S4 and S12 plays an important role in translational accuracy. Functionally, located at the back of the 30S subunit body where it stabilizes the conformation of the head with respect to the body. This is Small ribosomal subunit protein uS5 from Buchnera aphidicola subsp. Schizaphis graminum (strain Sg).